The chain runs to 151 residues: Methylglyoxal synthase (151 aa).

An MGS-like domain is found at 6 to 151; it reads RTMPAHKHVA…DYEAYLAERM (146 aa). Residues H19, K23, 45 to 48, and 65 to 66 contribute to the substrate site; these read TGTT and SG. The Proton donor/acceptor role is filled by D71. H98 provides a ligand contact to substrate.

The protein belongs to the methylglyoxal synthase family.

It carries out the reaction dihydroxyacetone phosphate = methylglyoxal + phosphate. Functionally, catalyzes the formation of methylglyoxal from dihydroxyacetone phosphate. The chain is Methylglyoxal synthase from Vibrio parahaemolyticus serotype O3:K6 (strain RIMD 2210633).